Here is a 392-residue protein sequence, read N- to C-terminus: Chorismate synthase (392 aa).

R40 and R46 together coordinate NADP(+). FMN is bound by residues 135–137 (RAS), 256–257 (QA), G300, 315–319 (KPIAT), and R341.

Belongs to the chorismate synthase family. As to quaternary structure, homotetramer. FMNH2 serves as cofactor.

It catalyses the reaction 5-O-(1-carboxyvinyl)-3-phosphoshikimate = chorismate + phosphate. Its pathway is metabolic intermediate biosynthesis; chorismate biosynthesis; chorismate from D-erythrose 4-phosphate and phosphoenolpyruvate: step 7/7. Functionally, catalyzes the anti-1,4-elimination of the C-3 phosphate and the C-6 proR hydrogen from 5-enolpyruvylshikimate-3-phosphate (EPSP) to yield chorismate, which is the branch point compound that serves as the starting substrate for the three terminal pathways of aromatic amino acid biosynthesis. This reaction introduces a second double bond into the aromatic ring system. The sequence is that of Chorismate synthase from Nocardioides sp. (strain ATCC BAA-499 / JS614).